A 61-amino-acid polypeptide reads, in one-letter code: Large ribosomal subunit protein eL37 (61 aa).

4 residues coordinate Zn(2+): C19, C22, C34, and C37. Residues C19–C37 form a C4-type zinc finger.

The protein belongs to the eukaryotic ribosomal protein eL37 family. Requires Zn(2+) as cofactor.

Its function is as follows. Binds to the 23S rRNA. This chain is Large ribosomal subunit protein eL37 (rpl37e), found in Saccharolobus solfataricus (strain ATCC 35092 / DSM 1617 / JCM 11322 / P2) (Sulfolobus solfataricus).